The following is a 294-amino-acid chain: Cytidine deaminase (294 aa).

CMP/dCMP-type deaminase domains lie at 48-168 and 186-294; these read DEDA…FGPK and LTGD…VLLA. 89-91 lines the substrate pocket; it reads NME. Zn(2+) is bound at residue histidine 102. Glutamate 104 acts as the Proton donor in catalysis. Zn(2+)-binding residues include cysteine 129 and cysteine 132.

Belongs to the cytidine and deoxycytidylate deaminase family. In terms of assembly, homodimer. Requires Zn(2+) as cofactor.

It catalyses the reaction cytidine + H2O + H(+) = uridine + NH4(+). The catalysed reaction is 2'-deoxycytidine + H2O + H(+) = 2'-deoxyuridine + NH4(+). Functionally, this enzyme scavenges exogenous and endogenous cytidine and 2'-deoxycytidine for UMP synthesis. In Escherichia coli (strain K12), this protein is Cytidine deaminase.